Consider the following 1188-residue polypeptide: Adenomatous polyposis coli protein-related protein 1 (1188 aa).

Positions 1 to 50 (MSSSSSDENETTIHRTGSNTGGSGIYSQPRAGSSKRTSNVRHDVSDVDDE) are disordered. A required for interaction with bar-1 and hmp-2 region spans residues 1 to 486 (MSSSSSDENE…LSLRATRASP (486 aa)). The ARM repeat unit spans residues 314-358 (NCLKVLASLLSPDARFTSLVDSATGILKYVSQYLANTSTHLELRS). A compositionally biased stretch (low complexity) spans 579–588 (IQQQQQMQKA). Disordered stretches follow at residues 579–624 (IQQQ…SMNP), 670–702 (TESEHHQLTSQQQNTTHYSSGSANTMTRSDGAT), 726–751 (TPNGTVPRKTSEELDSPDDVLPGPSL), 778–952 (QSEM…TMRF), 1003–1092 (CSMI…LKDK), and 1157–1181 (YQKPPFTGRNNGEMSNEKSVTPNPK). The segment at 600-1188 (DLDIPTSTVM…NPKQMLVTIV (589 aa)) is required for interaction with pry-1. Composition is skewed to polar residues over residues 604–624 (PTSTVMGTRSNSERSLGSMNP) and 677–701 (LTSQQQNTTHYSSGSANTMTRSDGA). Polar residues-rich tracts occupy residues 778–788 (QSEMPTSSSTP) and 800–811 (FSPTQKTTSSPA). Basic and acidic residues-rich tracts occupy residues 832–843 (RRQDASDADRLL) and 871–900 (EPERRSHSKNEEADRRDAFTASHEPSDHNG). Polar residues-rich tracts occupy residues 909 to 929 (WSPQQQLHRMESLESQASSED), 937 to 946 (EPNSSTSGAA), 1014 to 1039 (QRNETTTTSRDSKALATSTPKGSASS), and 1164 to 1180 (GRNNGEMSNEKSVTPNP).

Belongs to the adenomatous polyposis coli (APC) family. In terms of assembly, interacts (via N-terminus) with bar-1 and hmp-2; the interaction with hmp-2 is relatively weak. Interacts (via C-terminus) with pry-1 (via N-terminus). Probably associates with bar-1, gsk-3, pry-1 in a complex. During the L1 stage, expressed in vulval precursor cells (P3-8.p), seam cells and excretory cells.

The protein localises to the cell junction. It localises to the adherens junction. The protein resides in the cytoplasm. It is found in the nucleus. Functionally, has a role in endoderm cell specification and pharyngeal development. Required for the migration of epithelial cells, organization of the anterior seam cells and ceh-13 expression during embryo morphogenesis. Prevents hyperactivation of the Wnt signaling pathway during endoderm development, probably by preventing hmp-2 nuclear translocation. During larval development, apr-1 is required for expression of lin-39 in P3-8.p. Shown to negatively regulate Wnt signaling in vulval precursor cells. Has a role in cell division by establishing the polarity of the mother cell which forms the asymmetries of the daughter nuclei. During the L4 larval stage, it is required for the asymmetric division and self-renewal of seam cells. Thought to regulate export of wrm-1 from the nucleus possibly as part of a complex involving pry-1. The sequence is that of Adenomatous polyposis coli protein-related protein 1 from Caenorhabditis elegans.